Consider the following 81-residue polypeptide: Photosystem I iron-sulfur center (81 aa).

2 4Fe-4S ferredoxin-type domains span residues 2–31 (AHSVKIYATCIGCTQCVRACPTDVLEMVPW) and 39–68 (IASAPRTEDCVGCKRCESACPTDFLSVRVY). 8 residues coordinate [4Fe-4S] cluster: Cys-11, Cys-14, Cys-17, Cys-21, Cys-48, Cys-51, Cys-54, and Cys-58.

In terms of assembly, the eukaryotic PSI reaction center is composed of at least 11 subunits. The cofactor is [4Fe-4S] cluster.

It localises to the plastid. The protein localises to the chloroplast thylakoid membrane. The enzyme catalyses reduced [plastocyanin] + hnu + oxidized [2Fe-2S]-[ferredoxin] = oxidized [plastocyanin] + reduced [2Fe-2S]-[ferredoxin]. In terms of biological role, apoprotein for the two 4Fe-4S centers FA and FB of photosystem I (PSI); essential for photochemical activity. FB is the terminal electron acceptor of PSI, donating electrons to ferredoxin. The C-terminus interacts with PsaA/B/D and helps assemble the protein into the PSI complex. Required for binding of PsaD and PsaE to PSI. PSI is a plastocyanin-ferredoxin oxidoreductase, converting photonic excitation into a charge separation, which transfers an electron from the donor P700 chlorophyll pair to the spectroscopically characterized acceptors A0, A1, FX, FA and FB in turn. The sequence is that of Photosystem I iron-sulfur center from Mesostigma viride (Green alga).